A 917-amino-acid polypeptide reads, in one-letter code: Chitin synthase 1 (917 aa).

The span at 1–11 (MAYHGRGDGYD) shows a compositional bias: basic and acidic residues. Residues 1-56 (MAYHGRGDGYDGHQLQDLPGGHNQGDQHDDAQAPFLSENPMPYDNDRLGTDTPPVR) are disordered. The Extracellular segment spans residues 1 to 570 (MAYHGRGDGY…YKSGHNIVRM (570 aa)). N-linked (GlcNAc...) asparagine glycosylation is present at Asn-544. A helical membrane pass occupies residues 571–591 (FFFHVQLIYNIANVIFTWFSL). Residues 592 to 629 (ASYWLTTTVIMDLVGTPVTASSSSAEHHGWPFGDTVTP) lie on the Cytoplasmic side of the membrane. Residues 630 to 650 (FFNAVLKYIYLAFVILQFILA) form a helical membrane-spanning segment. Over 651-664 (LGNRPKGSKWTYIT) the chain is Extracellular. A helical membrane pass occupies residues 665 to 685 (SFFVFSLIQSYILVLSGYLVA). Over 686 to 716 (RAFSVPLDQQLQLDNAKDAMASLFGGSGSAG) the chain is Cytoplasmic. The chain crosses the membrane as a helical span at residues 717-737 (VILVALVTIYGLYFLASFMYL). Residues 738 to 744 (DPWHMFH) are Extracellular-facing. The chain crosses the membrane as a helical span at residues 745 to 765 (SFPYYMLLMSTYINILMIYAF). Residues 766-843 (NNWHDVSWGT…DLEDSYKSFR (78 aa)) are Cytoplasmic-facing. Residues 844 to 864 (TMLVVSWLFSNCLLAVVITSD) form a helical membrane-spanning segment. At 865–884 (NFNTFGIGQTASARTAWFFK) the chain is on the extracellular side. Residues 885-905 (FLLFATGALSVIRFIGFCWFL) form a helical membrane-spanning segment. Topologically, residues 906 to 917 (GRTGIMCCFARR) are cytoplasmic.

The protein belongs to the chitin synthase family. Class III subfamily.

The protein localises to the cell membrane. It carries out the reaction [(1-&gt;4)-N-acetyl-beta-D-glucosaminyl](n) + UDP-N-acetyl-alpha-D-glucosamine = [(1-&gt;4)-N-acetyl-beta-D-glucosaminyl](n+1) + UDP + H(+). Functionally, polymerizes chitin, a structural polymer of the cell wall and septum, by transferring the sugar moiety of UDP-GlcNAc to the non-reducing end of the growing chitin polymer. This chain is Chitin synthase 1 (chs-1), found in Neurospora crassa (strain ATCC 24698 / 74-OR23-1A / CBS 708.71 / DSM 1257 / FGSC 987).